Here is a 102-residue protein sequence, read N- to C-terminus: Small ribosomal subunit protein uS10 (102 aa).

It belongs to the universal ribosomal protein uS10 family. In terms of assembly, part of the 30S ribosomal subunit.

Its function is as follows. Involved in the binding of tRNA to the ribosomes. In Thermococcus kodakarensis (strain ATCC BAA-918 / JCM 12380 / KOD1) (Pyrococcus kodakaraensis (strain KOD1)), this protein is Small ribosomal subunit protein uS10.